We begin with the raw amino-acid sequence, 229 residues long: Potassium/proton antiporter CemA (229 aa).

3 consecutive transmembrane segments (helical) span residues 7 to 27 (FTPL…SFSV), 107 to 127 (ILHF…SILG), and 189 to 209 (IISG…KYWI).

Belongs to the CemA family.

The protein resides in the plastid. Its subcellular location is the chloroplast inner membrane. It catalyses the reaction K(+)(in) + H(+)(out) = K(+)(out) + H(+)(in). Its function is as follows. Contributes to K(+)/H(+) antiport activity by supporting proton efflux to control proton extrusion and homeostasis in chloroplasts in a light-dependent manner to modulate photosynthesis. Prevents excessive induction of non-photochemical quenching (NPQ) under continuous-light conditions. Indirectly promotes efficient inorganic carbon uptake into chloroplasts. The protein is Potassium/proton antiporter CemA of Nicotiana sylvestris (Wood tobacco).